We begin with the raw amino-acid sequence, 1214 residues long: MAAVRVVAPAPSVLLLVAAAVVLLHLARAIAGAADEAAALLAFKDASVAADPGGALAGWANSTTPGSPCAWAGVSCAAGRVRALDLSGMSLSGRLRLDALLALSALRRLDLRGNAFHGDLSRHGSPRRAAPCALVEVDISSNTFNGTLPRAFLASCGGLQTLNLSRNSLTGGGYPFPPSLRRLDMSRNQLSDAGLLNYSLTGCHGIQYLNLSANQFTGSLPGLAPCTEVSVLDLSWNLMSGVLPPRFVAMAPANLTYLSIAGNNFSMDISDYEFGGCANLTLLDWSYNRLRSTGLPRSLVDCRRLEALDMSGNKLLSGPIPTFLVELQALRRLSLAGNRFTGEISDKLSILCKTLVELDLSSNQLIGSLPASFGQCRFLQVLDLGNNQLSGDFVETVITNISSLRVLRLPFNNITGANPLPALASRCPLLEVIDLGSNEFDGEIMPDLCSSLPSLRKLLLPNNYINGTVPSSLSNCVNLESIDLSFNLLVGQIPPEILFLLKLVDLVLWANNLSGEIPDKFCFNSTALETLVISYNSFTGNIPESITRCVNLIWLSLAGNNLTGSIPSGFGNLQNLAILQLNKNSLSGKVPAELGSCSNLIWLDLNSNELTGTIPPQLAAQAGLITGAIVSGKQFAFLRNEAGNICPGAGVLFEFLDIRPDRLANFPAVHLCSSTRIYTGTTVYTFRNNGSMIFLDLSYNSLTGTIPASFGNMTYLEVLNLGHNELTGAIPDAFTGLKGIGALDLSHNHLTGVIPPGFGCLHFLADFDVSNNNLTGEIPTSGQLITFPASRYENNSGLCGIPLNPCVHNSGAGGLPQTSYGHRNFARQSVFLAVTLSVLILFSLLIIHYKLWKFHKNKTKEIQAGCSESLPGSSKSSWKLSGIGEPLSINMAIFENPLRKLTFSDLHQATNGFCAETLIGSGGFGEVYKAKLKDGNIVAVKKLMHFTGQGDREFTAEMETIGKIKHRNLVPLLGYCKIGDERLLVYEYMKNGSLDFVLHDKGEANMDLNWATRKKIAIGSARGLAFLHHSCVPHIIHRDMKSSNVLLDGNFDAYVSDFGMARLMNALDSHLTVSMLSGTPGYVPPEYCQDFRCTTKGDVYSYGVVLLELLTGKKPIDPTEFGDSNLVGWVKQMVEDRCSEIYDPTLMATTSSELELYQYLKIACRCLDDQPNRRPTMIQVMTMFKEFQVDSGSNFLDDFSLNSTNMEESSEKSV.

Residues 1–29 form the signal peptide; the sequence is MAAVRVVAPAPSVLLLVAAAVVLLHLARA. A glycan (N-linked (GlcNAc...) asparagine) is linked at N61. A Cys pair 1 motif is present at residues 69-76; the sequence is CAWAGVSC. LRR repeat units follow at residues 103–127, 131–155, 156–177, 178–202, 204–228, 230–250, 252–276, 277–302, 303–325, 327–351, 353–375, 377–400, 401–427, 429–451, 452–476, 478–500, 502–525, 526–549, 550–572, 573–597, 599–621, and 650–673; these read LSAL…GSPR, PCAL…FLAS, CGGL…YPFP, PSLR…SLTG, HGIQ…PCTE, SVLD…FVAM, PANL…EFGG, CANL…LVDC, RRLE…TFLV, LQAL…LSIL, KTLV…SFGQ, RFLQ…VITN, ISSL…ASRC, LLEV…LCSS, LPSL…LSNC, NLES…ILFL, KLVD…CFNS, TALE…ITRC, VNLI…GFGN, LQNL…LGSC, NLIW…LAAQ, and GVLF…HLCS. N-linked (GlcNAc...) asparagine glycosylation is found at N145, N163, N197, and N210. N-linked (GlcNAc...) asparagine glycosylation is found at N254, N264, and N279. Residues N400 and N413 are each glycosylated (N-linked (GlcNAc...) asparagine). N466 is a glycosylation site (N-linked (GlcNAc...) asparagine). N512 and N524 each carry an N-linked (GlcNAc...) asparagine glycan. N561 is a glycosylation site (N-linked (GlcNAc...) asparagine). Position 678 (Y678) interacts with brassinolide. LRR repeat units follow at residues 689–712, 713–736, 738–760, and 762–786; these read NGSM…SFGN, MTYL…AFTG, KGIG…GFGC, and HFLA…QLIT. Residues 799 to 806 carry the Cys pair 2 motif; it reads CGIPLNPC. A helical transmembrane segment spans residues 829-849; the sequence is SVFLAVTLSVLILFSLLIIHY. A Protein kinase domain is found at 913 to 1196; sequence FCAETLIGSG…FQVDSGSNFL (284 aa). Residues 919–927, K941, 987–989, 993–996, 1039–1044, and D1057 contribute to the ATP site; these read IGSGGFGEV, EYM, SLDF, and DMKSSN. The active-site Proton acceptor is the D1039.

Belongs to the protein kinase superfamily. Ser/Thr protein kinase family. In terms of tissue distribution, highly expressed in roots. Expressed at low levels in shoots.

Its subcellular location is the cell membrane. It catalyses the reaction L-seryl-[protein] + ATP = O-phospho-L-seryl-[protein] + ADP + H(+). The enzyme catalyses L-threonyl-[protein] + ATP = O-phospho-L-threonyl-[protein] + ADP + H(+). Functionally, may be involved in brassenosteroid (BR) perception in roots. In Oryza sativa subsp. japonica (Rice), this protein is Brassinosteroid LRR receptor kinase BRL3.